Consider the following 221-residue polypeptide: Deoxyribose-phosphate aldolase (221 aa).

Catalysis depends on Asp-91, which acts as the Proton donor/acceptor. Lys-153 (schiff-base intermediate with acetaldehyde) is an active-site residue. Residue Lys-182 is the Proton donor/acceptor of the active site.

This sequence belongs to the DeoC/FbaB aldolase family. DeoC type 1 subfamily.

The protein resides in the cytoplasm. It carries out the reaction 2-deoxy-D-ribose 5-phosphate = D-glyceraldehyde 3-phosphate + acetaldehyde. The protein operates within carbohydrate degradation; 2-deoxy-D-ribose 1-phosphate degradation; D-glyceraldehyde 3-phosphate and acetaldehyde from 2-deoxy-alpha-D-ribose 1-phosphate: step 2/2. Its function is as follows. Catalyzes a reversible aldol reaction between acetaldehyde and D-glyceraldehyde 3-phosphate to generate 2-deoxy-D-ribose 5-phosphate. In Clostridium botulinum (strain Alaska E43 / Type E3), this protein is Deoxyribose-phosphate aldolase.